Reading from the N-terminus, the 185-residue chain is DNA-directed RNA polymerase 22 kDa subunit (185 aa).

Belongs to the poxviridae DNA-directed RNA polymerase 22 kDa subunit family. The DNA-dependent RNA polymerase used for intermediate and late genes expression consists of eight subunits Rpo30/OPG66, Rpo7/OPG90, Rpo22/OPG103, Rpo147/OPG105, Rpo18/OPG119, Rpo19/OPG131, Rpo132/OPG151 and Rpo35/OPG156. The same holoenzyme, with the addition of the transcription-specificity factor OPG109, is used for early gene expression.

Its subcellular location is the virion. The catalysed reaction is RNA(n) + a ribonucleoside 5'-triphosphate = RNA(n+1) + diphosphate. Part of the DNA-dependent RNA polymerase which catalyzes the transcription of viral DNA into RNA using the four ribonucleoside triphosphates as substrates. Responsible for the transcription of early, intermediate and late genes. DNA-dependent RNA polymerase associates with the early transcription factor (ETF), itself composed of OPG118 and OPG133, thereby allowing the early genes transcription. Late transcription, and probably also intermediate transcription, require newly synthesized RNA polymerase. The sequence is that of DNA-directed RNA polymerase 22 kDa subunit (OPG103) from Cynomys gunnisoni (Gunnison's prairie dog).